Consider the following 395-residue polypeptide: Protein maternal effect lethal 26 (395 aa).

The MATH domain maps to 41–162; that stretch reads KVQHTWTVKN…RDMIIVNVEI (122 aa). Positions 201-269 constitute a BTB domain; it reads CDFAINVNGK…IYCGRCNKDI (69 aa).

Interacts (via BTB domain) with cul-3. Seems to be a component of a E3 ubiquitin-protein ligase complex containing cul-3. Interacts (probably via MATH domain) with mei-1, which targets mei-1 for ubiquitin-mediated proteolysis. Interacts (probably via MATH domain) with ppfr-1, the regulatory subunit of the PP4 complex; targets ppfr-1 for ubiquitin-mediated proteolysis. May interact (via MATH domain) with unc-89 (via Ig-like C2-type domain 2/3 and, Ig-like C2-type domain 50 and fibronectin type-III domain 2). In terms of tissue distribution, expressed in body wall muscles.

It is found in the cytoplasm. It localises to the myofibril. Its subcellular location is the sarcomere. The protein resides in the m line. The protein localises to the i band. It participates in protein modification; protein ubiquitination. Functionally, probable substrate-specific adapter of an E3 ubiquitin-protein ligase complex which mediates the ubiquitination and subsequent proteasomal degradation of target proteins. Controls degradation of microtubule severing protein mei-1 after meiosis. Controls degradation of ppfr-1, the regulatory subunit of PP4 complex, after meiosis. In body wall muscles, involved in the organization of myosin thick filaments, likely by regulating the degradation of mei-1 downstream of unc-89. May also activate the TORC1 pathway. The polypeptide is Protein maternal effect lethal 26 (mel-26) (Caenorhabditis elegans).